Reading from the N-terminus, the 535-residue chain is Succinate-semialdehyde dehydrogenase, mitochondrial (535 aa).

Residues 1 to 47 (MATCIWLRSCGARRLGSTFPGCRLRPRAGGLVPASGPAPGPAQLRCY) constitute a mitochondrion transit peptide. N6-acetyllysine; alternate is present on Lys-126. Lys-126 is subject to N6-succinyllysine; alternate. Lys-135 and Lys-184 each carry N6-succinyllysine. 202–204 (TPW) contacts NAD(+). Residue Arg-213 participates in substrate binding. 228 to 231 (KPAE) is a binding site for NAD(+). Lys-265 is subject to N6-acetyllysine; alternate. Lys-265 bears the N6-succinyllysine; alternate mark. NAD(+) is bound by residues 284–289 (GSTTTG) and Glu-306. The active-site Proton acceptor is Glu-306. Arg-334 contacts substrate. Cys-340 (nucleophile) is an active-site residue. An intrachain disulfide couples Cys-340 to Cys-342. Lys-365 is subject to N6-acetyllysine. Lys-402 is subject to N6-succinyllysine. N6-acetyllysine is present on Lys-411. 438–440 (ETF) is an NAD(+) binding site. Ser-498 contacts substrate. Residue Ser-499 is modified to Phosphoserine.

It belongs to the aldehyde dehydrogenase family. Homotetramer. As to expression, brain, pancreas, heart, liver, skeletal muscle and kidney. Lower in placenta.

It localises to the mitochondrion. It carries out the reaction succinate semialdehyde + NAD(+) + H2O = succinate + NADH + 2 H(+). It functions in the pathway amino-acid degradation; 4-aminobutanoate degradation. With respect to regulation, redox-regulated. Inhibited under oxydizing conditions. Inhibited by hydrogen peroxide H(2)O(2). In terms of biological role, catalyzes one step in the degradation of the inhibitory neurotransmitter gamma-aminobutyric acid (GABA). The chain is Succinate-semialdehyde dehydrogenase, mitochondrial from Homo sapiens (Human).